We begin with the raw amino-acid sequence, 138 residues long: Small ribosomal subunit protein uS9c (138 aa).

This sequence belongs to the universal ribosomal protein uS9 family.

The protein localises to the plastid. It is found in the chloroplast. This is Small ribosomal subunit protein uS9c (rps9) from Trieres chinensis (Marine centric diatom).